We begin with the raw amino-acid sequence, 88 residues long: Small ribosomal subunit protein uS15 (88 aa).

The protein belongs to the universal ribosomal protein uS15 family. As to quaternary structure, part of the 30S ribosomal subunit. Forms a bridge to the 50S subunit in the 70S ribosome, contacting the 23S rRNA.

Functionally, one of the primary rRNA binding proteins, it binds directly to 16S rRNA where it helps nucleate assembly of the platform of the 30S subunit by binding and bridging several RNA helices of the 16S rRNA. Its function is as follows. Forms an intersubunit bridge (bridge B4) with the 23S rRNA of the 50S subunit in the ribosome. In Syntrophus aciditrophicus (strain SB), this protein is Small ribosomal subunit protein uS15.